Consider the following 166-residue polypeptide: Endoribonuclease YbeY (166 aa).

Positions 111, 115, and 121 each coordinate Zn(2+). Residues 140–166 are disordered; that stretch reads ELGYPDPYADDESADPPHSDTPSKDHE. Residues 154 to 166 show a composition bias toward basic and acidic residues; the sequence is DPPHSDTPSKDHE.

Belongs to the endoribonuclease YbeY family. Zn(2+) is required as a cofactor.

The protein resides in the cytoplasm. Functionally, single strand-specific metallo-endoribonuclease involved in late-stage 70S ribosome quality control and in maturation of the 3' terminus of the 16S rRNA. The sequence is that of Endoribonuclease YbeY from Pseudomonas syringae pv. syringae (strain B728a).